Reading from the N-terminus, the 774-residue chain is 5-methyltetrahydropteroyltriglutamate--homocysteine methyltransferase (774 aa).

Residues 24–27 and K120 contribute to the 5-methyltetrahydropteroyltri-L-glutamate site; that span reads RELK. Residues 446–448 and E499 each bind L-homocysteine; that span reads IGS. L-methionine contacts are provided by residues 446-448 and E499; that span reads IGS. Residue W576 coordinates 5-methyltetrahydropteroyltri-L-glutamate. Position 614 (D614) interacts with L-homocysteine. D614 serves as a coordination point for L-methionine. Position 620 (E620) interacts with 5-methyltetrahydropteroyltri-L-glutamate. H656, C658, and E680 together coordinate Zn(2+). The Proton donor role is filled by H709. Residue C741 participates in Zn(2+) binding.

This sequence belongs to the vitamin-B12 independent methionine synthase family. Requires Zn(2+) as cofactor.

It catalyses the reaction 5-methyltetrahydropteroyltri-L-glutamate + L-homocysteine = tetrahydropteroyltri-L-glutamate + L-methionine. It participates in amino-acid biosynthesis; L-methionine biosynthesis via de novo pathway; L-methionine from L-homocysteine (MetE route): step 1/1. Functionally, catalyzes the transfer of a methyl group from 5-methyltetrahydrofolate to homocysteine resulting in methionine formation. In Streptomyces griseus subsp. griseus (strain JCM 4626 / CBS 651.72 / NBRC 13350 / KCC S-0626 / ISP 5235), this protein is 5-methyltetrahydropteroyltriglutamate--homocysteine methyltransferase.